The following is a 974-amino-acid chain: Zinc finger protein 280D (974 aa).

Residues Lys-44, Lys-46, Lys-86, Lys-99, Lys-138, Lys-201, Lys-222, Lys-245, Lys-287, and Lys-304 each participate in a glycyl lysine isopeptide (Lys-Gly) (interchain with G-Cter in SUMO2) cross-link. Residues 188 to 216 (KRPSGSDISSVNPKKPKPSENTSGIDASS) are disordered. C2H2-type zinc fingers lie at residues 333–355 (FKCF…MKHH) and 370–393 (TTCQ…ESTH). The segment at 400–424 (TICKICELSFETEQILLQHMKDNHK) adopts a C2H2-type 3; degenerate zinc-finger fold. 2 C2H2-type zinc fingers span residues 430 to 453 (YICQ…RTSH) and 459 to 481 (LLCP…YMKH). Disordered regions lie at residues 507–624 (TQHH…KVNT), 751–797 (IKTE…EGTG), and 815–974 (VTVS…EERS). Over residues 539 to 557 (SGSSVTPSISPSTSTLQLS) the composition is skewed to low complexity. At Ser-557 the chain carries Phosphoserine. The segment covering 571–587 (KLTTSTPNTTISDPSKA) has biased composition (polar residues). Over residues 591-611 (KSNGSKSKNKSKVSNMQKKQS) the composition is skewed to low complexity. Residues 612–624 (TLSSSNKKSKVNT) show a composition bias toward polar residues. Lys-752 is covalently cross-linked (Glycyl lysine isopeptide (Lys-Gly) (interchain with G-Cter in SUMO2)). Over residues 763-775 (VSKETARHSRAEG) the composition is skewed to basic and acidic residues. The span at 817 to 829 (VSDTENVSSSKNI) shows a compositional bias: polar residues. Residues 830 to 860 (LSHDPDVGTDTMEKEEKTHHACQEMELKVDQ) show a composition bias toward basic and acidic residues. Residues 861 to 884 (SSESTNPTEAELSSETRQGLQLTS) show a composition bias toward polar residues. Phosphoserine occurs at positions 904 and 907. The segment covering 938–950 (SANTSDTVSDQTG) has biased composition (polar residues).

The protein localises to the nucleus. Its function is as follows. May function as a transcription factor. This chain is Zinc finger protein 280D (Znf280d), found in Mus musculus (Mouse).